The primary structure comprises 266 residues: tRNA pseudouridine synthase A (266 aa).

Asp-57 acts as the Nucleophile in catalysis. A substrate-binding site is contributed by Tyr-115.

The protein belongs to the tRNA pseudouridine synthase TruA family. Homodimer.

The catalysed reaction is uridine(38/39/40) in tRNA = pseudouridine(38/39/40) in tRNA. Its function is as follows. Formation of pseudouridine at positions 38, 39 and 40 in the anticodon stem and loop of transfer RNAs. This Buchnera aphidicola subsp. Acyrthosiphon pisum (strain Tuc7) protein is tRNA pseudouridine synthase A.